We begin with the raw amino-acid sequence, 397 residues long: Ubiquitin-like modifier-activating enzyme 5 (397 aa).

ATP is bound by residues glycine 77, aspartate 98, lysine 121, asparagine 144, and asparagine 178. Zn(2+)-binding residues include cysteine 220 and cysteine 223. Cysteine 244 (glycyl thioester intermediate) is an active-site residue. Zn(2+) is bound by residues cysteine 297 and cysteine 302.

The protein belongs to the ubiquitin-activating E1 family. UBA5 subfamily.

In terms of biological role, E1-like enzyme which activates UFM1. This Culex quinquefasciatus (Southern house mosquito) protein is Ubiquitin-like modifier-activating enzyme 5.